We begin with the raw amino-acid sequence, 236 residues long: HTH-type transcriptional regulator SACE_5812 (236 aa).

The HTH tetR-type domain maps to Leu30–Val90. Positions Ser53 to Val72 form a DNA-binding region, H-T-H motif.

Its function is as follows. Transcriptional regulator that inhibits erythromycin production. Directly represses the expression of SACE_5813, eryAI (encoding polyketide synthase I) and ermE (encoding rRNA methyltransferase), suggesting its direct regulation of the erythromycin biosynthesis gene cluster. May play an important role in regulating secondary metabolism in actinomycetes. The chain is HTH-type transcriptional regulator SACE_5812 from Saccharopolyspora erythraea (strain ATCC 11635 / DSM 40517 / JCM 4748 / NBRC 13426 / NCIMB 8594 / NRRL 2338).